Reading from the N-terminus, the 315-residue chain is Ribosomal protein L11 methyltransferase (315 aa).

4 residues coordinate S-adenosyl-L-methionine: T152, G185, D207, and N249.

It belongs to the methyltransferase superfamily. PrmA family.

It is found in the cytoplasm. It carries out the reaction L-lysyl-[protein] + 3 S-adenosyl-L-methionine = N(6),N(6),N(6)-trimethyl-L-lysyl-[protein] + 3 S-adenosyl-L-homocysteine + 3 H(+). Functionally, methylates ribosomal protein L11. This Geotalea uraniireducens (strain Rf4) (Geobacter uraniireducens) protein is Ribosomal protein L11 methyltransferase.